We begin with the raw amino-acid sequence, 138 residues long: MTSERTKNLRELEAALGLLKLSGFQMNRYCTGKQMRKTRLQTCVLNRIFEISRFPSSKTIVDLALLINVHPKSIQKWFQNTRQAIRKKGSTKGALLLAESEEHSAVDIPLPILADIVEIERRTVSKFGLERVFLQDSN.

Positions 30–89 (CTGKQMRKTRLQTCVLNRIFEISRFPSSKTIVDLALLINVHPKSIQKWFQNTRQAIRKKG) form a DNA-binding region, homeobox.

Its subcellular location is the nucleus. This chain is Homeobox protein HD-11 (HD-11), found in Encephalitozoon cuniculi (strain GB-M1) (Microsporidian parasite).